The primary structure comprises 131 residues: Small ribosomal subunit protein bS6 (131 aa).

Positions 98-131 (EASPMVKAKDERRERREDFANETADDSEAGDSEE) are disordered. A compositionally biased stretch (basic and acidic residues) spans 104–116 (KAKDERRERREDF). Residues 120–131 (TADDSEAGDSEE) are compositionally biased toward acidic residues.

Belongs to the bacterial ribosomal protein bS6 family.

Functionally, binds together with bS18 to 16S ribosomal RNA. The chain is Small ribosomal subunit protein bS6 from Klebsiella pneumoniae (strain 342).